The chain runs to 205 residues: Small ribosomal subunit protein uS4 (205 aa).

The segment at 18 to 46 is disordered; sequence NIWGRPKSPVNRREYGPGQHGQRRKGKLS. Residues 94–154 enclose the S4 RNA-binding domain; that stretch reads RRLDAVVYRA…EASKQLAHVL (61 aa).

Belongs to the universal ribosomal protein uS4 family. In terms of assembly, part of the 30S ribosomal subunit. Contacts protein S5. The interaction surface between S4 and S5 is involved in control of translational fidelity.

In terms of biological role, one of the primary rRNA binding proteins, it binds directly to 16S rRNA where it nucleates assembly of the body of the 30S subunit. Functionally, with S5 and S12 plays an important role in translational accuracy. The polypeptide is Small ribosomal subunit protein uS4 (Bradyrhizobium diazoefficiens (strain JCM 10833 / BCRC 13528 / IAM 13628 / NBRC 14792 / USDA 110)).